The sequence spans 327 residues: Biotin synthase (327 aa).

In terms of domain architecture, Radical SAM core spans 48 to 278; that stretch reads YCGDGVGLCM…DRHITVCGGR (231 aa). The [4Fe-4S] cluster site is built by Cys66, Cys70, and Cys73. [2Fe-2S] cluster-binding residues include Ser143 and Cys203.

The protein belongs to the radical SAM superfamily. Biotin synthase family. Homodimer. Requires [4Fe-4S] cluster as cofactor. [2Fe-2S] cluster is required as a cofactor.

It catalyses the reaction (4R,5S)-dethiobiotin + (sulfur carrier)-SH + 2 reduced [2Fe-2S]-[ferredoxin] + 2 S-adenosyl-L-methionine = (sulfur carrier)-H + biotin + 2 5'-deoxyadenosine + 2 L-methionine + 2 oxidized [2Fe-2S]-[ferredoxin]. The protein operates within cofactor biosynthesis; biotin biosynthesis; biotin from 7,8-diaminononanoate: step 2/2. In terms of biological role, catalyzes the conversion of dethiobiotin (DTB) to biotin by the insertion of a sulfur atom into dethiobiotin via a radical-based mechanism. This Syntrophotalea carbinolica (strain DSM 2380 / NBRC 103641 / GraBd1) (Pelobacter carbinolicus) protein is Biotin synthase.